The sequence spans 577 residues: Laccase-25 (577 aa).

The N-terminal stretch at 1-22 (MTLHWSLLLFIAIALVSSVAQA) is a signal peptide. Plastocyanin-like domains follow at residues 30-147 (NVGN…PRGG) and 158-313 (KEHV…YAGA). N-linked (GlcNAc...) asparagine glycosylation is present at N33. 2 residues coordinate Cu cation: H81 and H83. The N-linked (GlcNAc...) asparagine glycan is linked to N109. Cu cation is bound by residues H126 and H128. N-linked (GlcNAc...) asparagine glycosylation is found at N169, N203, N208, N218, N332, N383, N396, N404, N441, and N459. Positions 423–560 (DFPDTPPVVF…AMVLEVLDGP (138 aa)) constitute a Plastocyanin-like 3 domain. Cu cation is bound by residues H477, H480, H482, H539, C540, H541, and H545.

Belongs to the multicopper oxidase family. Cu cation serves as cofactor.

It is found in the secreted. The protein localises to the extracellular space. The protein resides in the apoplast. The enzyme catalyses 4 hydroquinone + O2 = 4 benzosemiquinone + 2 H2O. Lignin degradation and detoxification of lignin-derived products. This is Laccase-25 (LAC25) from Oryza sativa subsp. japonica (Rice).